Reading from the N-terminus, the 138-residue chain is Large ribosomal subunit protein uL16 (138 aa).

Over residues 1-15 the composition is skewed to basic residues; the sequence is MLSPRKVKYRKKQRG. Residues 1-21 are disordered; the sequence is MLSPRKVKYRKKQRGRLSGEA.

The protein belongs to the universal ribosomal protein uL16 family. Part of the 50S ribosomal subunit.

Binds 23S rRNA and is also seen to make contacts with the A and possibly P site tRNAs. The chain is Large ribosomal subunit protein uL16 from Borrelia duttonii (strain Ly).